Consider the following 434-residue polypeptide: MGLARALRRLSGALEPGNSRAGDEEEAGAGLCRNGWAPGPVAGNRRRGRFVKKDGHCNVRFVNLGGQGARYLSDLFTTCVDVRWRWMCLLFSCSFLASWLLFGLTFWLIASLHGDLAAPPPPAPCFSQVASFLAAFLFALETQTSIGYGVRSVTEECPAAVAAVVLQCIAGCVLDAFVVGAVMAKMAKPKKRNETLVFSENAVVALRDRRLCLMWRVGNLRRSHLVEAHVRAQLLQPRVTPEGEYIPLDHQDVDVGFDGGTDRIFLVSPITIVHEIDSASPLYELGRAELARADFELVVILEGMVEATAMTTQCRSSYLPGELLWGHRFEPVLFQRGSQYEVDYRHFHRTYEVPGTPVCSAKELDERAEQASHSPKSSFPGSLAAFCYENELALSCCQEEDEEEDTKEGTSAETPDRAASPQALTPTLALTLPP.

Residues 1-81 (MGLARALRRL…LSDLFTTCVD (81 aa)) lie on the Cytoplasmic side of the membrane. At cysteine 79 the chain carries S-nitrosocysteine. A helical membrane pass occupies residues 82-108 (VRWRWMCLLFSCSFLASWLLFGLTFWL). The Extracellular segment spans residues 109-131 (IASLHGDLAAPPPPAPCFSQVAS). The helical; Pore-forming intramembrane region spans 132–148 (FLAAFLFALETQTSIGY). The Selectivity filter signature appears at 145–150 (SIGYGV). Over 149 to 157 (GVRSVTEEC) the chain is Extracellular. The chain crosses the membrane as a helical span at residues 158 to 185 (PAAVAAVVLQCIAGCVLDAFVVGAVMAK). Residues 186-434 (MAKPKKRNET…TPTLALTLPP (249 aa)) lie on the Cytoplasmic side of the membrane. The segment at 398-434 (QEEDEEEDTKEGTSAETPDRAASPQALTPTLALTLPP) is disordered. Residues 407-416 (KEGTSAETPD) are compositionally biased toward basic and acidic residues. A compositionally biased stretch (low complexity) spans 418 to 434 (AASPQALTPTLALTLPP).

The protein belongs to the inward rectifier-type potassium channel (TC 1.A.2.1) family. KCNJ14 subfamily. As to expression, expressed predominantly in motoneurons of cranial nerve motor nuclei within the general somatic and special visceral motor cell column.

Its subcellular location is the membrane. The enzyme catalyses K(+)(in) = K(+)(out). Channel activity is regulated by variations of cytosolic pH; channels are activated by alkaline and inhibited by acidic pH values. Inhibited by Ba(2+) and Cs(+) in a voltage-dependent manner; sensitivity to those inhibitors is lower than in other Kir channels. In terms of biological role, inward rectifier potassium channels are characterized by a greater tendency to allow potassium to flow into the cell rather than out of it. Their voltage dependence is regulated by the concentration of extracellular potassium; as external potassium is raised, the voltage range of the channel opening shifts to more positive voltages. The chain is ATP-sensitive inward rectifier potassium channel 14 (Kcnj14) from Rattus norvegicus (Rat).